The primary structure comprises 165 residues: Lipoprotein signal peptidase (165 aa).

Transmembrane regions (helical) follow at residues 9 to 29 (PFLWISAVAFFTDLITKLAVV), 65 to 85 (WQKYFFILLALAVSFMILFFL), and 97 to 119 (TGYALMIGGALANAADRAYHGFV). Residues D121 and D139 contribute to the active site. A helical membrane pass occupies residues 134–154 (VFNVADIAICIGAGLLAIDAF).

This sequence belongs to the peptidase A8 family.

The protein localises to the cell inner membrane. It catalyses the reaction Release of signal peptides from bacterial membrane prolipoproteins. Hydrolyzes -Xaa-Yaa-Zaa-|-(S,diacylglyceryl)Cys-, in which Xaa is hydrophobic (preferably Leu), and Yaa (Ala or Ser) and Zaa (Gly or Ala) have small, neutral side chains.. Its pathway is protein modification; lipoprotein biosynthesis (signal peptide cleavage). Its function is as follows. This protein specifically catalyzes the removal of signal peptides from prolipoproteins. This Histophilus somni (strain 2336) (Haemophilus somnus) protein is Lipoprotein signal peptidase.